We begin with the raw amino-acid sequence, 251 residues long: MVEYQVKIDTFEGPLDLLLHLINRLEIDIYDIPVATITEQYLLYVHTMQELELDVASEYLVMAATLLSIKSRMLLPKQEEELFEDEMLEEEDPRDELIEKLIEYRKYKTAAKDLKEREEERQKSFTKPPSDLSEYAKEIKQTEQKLSVTVYDMIGAFQKVLQRKKITRPKETTITRQEIPIEDRMNEIVKSLKTAGRRINFTELFPSRQKDHLVVTFLAVLELMKNQQIIIEQEENFSDIYITGSESIHGA.

This sequence belongs to the ScpA family. In terms of assembly, component of a cohesin-like complex composed of ScpA, ScpB and the Smc homodimer, in which ScpA and ScpB bind to the head domain of Smc. The presence of the three proteins is required for the association of the complex with DNA.

Its subcellular location is the cytoplasm. Functionally, participates in chromosomal partition during cell division. May act via the formation of a condensin-like complex containing Smc and ScpB that pull DNA away from mid-cell into both cell halves. This is Segregation and condensation protein A from Bacillus velezensis (strain DSM 23117 / BGSC 10A6 / LMG 26770 / FZB42) (Bacillus amyloliquefaciens subsp. plantarum).